The primary structure comprises 136 residues: Succinate dehydrogenase assembly factor 3, mitochondrial (136 aa).

The transit peptide at 1–24 (MRASMVRRMAAAASSSASSSLRPA) directs the protein to the mitochondrion.

It belongs to the complex I LYR family. SDHAF3 subfamily. As to quaternary structure, interacts with the iron-sulfur protein subunit within the SDH catalytic dimer.

It is found in the mitochondrion matrix. Functionally, plays an essential role in the assembly of succinate dehydrogenase (SDH), an enzyme complex (also referred to as respiratory complex II) that is a component of both the tricarboxylic acid (TCA) cycle and the mitochondrial electron transport chain, and which couples the oxidation of succinate to fumarate with the reduction of ubiquinone (coenzyme Q) to ubiquinol. Promotes maturation of the iron-sulfur protein subunit of the SDH catalytic dimer, protecting it from the deleterious effects of oxidants. May act together with SDHAF1. The protein is Succinate dehydrogenase assembly factor 3, mitochondrial of Pyricularia oryzae (strain 70-15 / ATCC MYA-4617 / FGSC 8958) (Rice blast fungus).